A 155-amino-acid chain; its full sequence is Transcriptional repressor NrdR (155 aa).

A zinc finger lies at 3-34 (CPKCDHNGTRVLDSRPVQDHYSIRRRRECEKC). Positions 49 to 139 (LIIVKKDGNR…VYRQFKDITV (91 aa)) constitute an ATP-cone domain.

This sequence belongs to the NrdR family. Zn(2+) is required as a cofactor.

Its function is as follows. Negatively regulates transcription of bacterial ribonucleotide reductase nrd genes and operons by binding to NrdR-boxes. The protein is Transcriptional repressor NrdR of Exiguobacterium sp. (strain ATCC BAA-1283 / AT1b).